Reading from the N-terminus, the 312-residue chain is Beta-lactamase regulatory protein BlaB (312 aa).

This is Beta-lactamase regulatory protein BlaB (blaB) from Streptomyces cacaoi.